The primary structure comprises 1437 residues: Envelopment polyprotein (1437 aa).

Positions methionine 1–threonine 21 are cleaved as a signal peptide. At alanine 22–asparagine 207 the chain is on the lumenal side. 2 N-linked (GlcNAc...) asparagine; by host glycosylation sites follow: asparagine 65 and asparagine 88. A helical transmembrane segment spans residues isoleucine 208–threonine 228. At arginine 229 to lysine 312 the chain is on the cytoplasmic side. The helical transmembrane segment at glycine 313–leucine 333 threads the bilayer. Over glutamate 334–serine 373 the chain is Lumenal. The chain crosses the membrane as a helical span at residues isoleucine 374–leucine 394. Residues glutamate 395–lysine 460 lie on the Cytoplasmic side of the membrane. The chain crosses the membrane as a helical span at residues leucine 461–alanine 481. At glycine 482–tyrosine 1391 the chain is on the lumenal side. Asparagine 627 and asparagine 1173 each carry an N-linked (GlcNAc...) asparagine; by host glycan. The chain crosses the membrane as a helical span at residues leucine 1392–leucine 1412. Over methionine 1413–arginine 1437 the chain is Cytoplasmic.

Belongs to the orthobunyavirus envelope glycoprotein family. In terms of assembly, glycoprotein C and Glycoprotein N interact with each other. In terms of processing, specific enzymatic cleavages in vivo yield mature proteins including nonstructural protein NSm, Glycoprotein C, and Glycoprotein N.

It localises to the virion membrane. The protein resides in the host Golgi apparatus membrane. Its subcellular location is the host endoplasmic reticulum membrane. Glycoprotein C and Glycoprotein N interact with each other and are present at the surface of the virion. They are able to attach the virion to a cell receptor and to promote fusion of membranes after endocytosis of the virion. The sequence is that of Envelopment polyprotein (GP) from Culex.